Reading from the N-terminus, the 332-residue chain is Glyceraldehyde-3-phosphate dehydrogenase 3 (332 aa).

Residues Arg11, Ile12, and Asp33 each coordinate NAD(+). Residues Lys46 and Lys63 each participate in a glycyl lysine isopeptide (Lys-Gly) (interchain with G-Cter in ubiquitin) cross-link. NAD(+) is bound at residue Thr120. Position 149 to 151 (149 to 151 (SCT)) interacts with D-glyceraldehyde 3-phosphate. The active-site Nucleophile is Cys150. Cysteine persulfide occurs at positions 150 and 154. Lys160 participates in a covalent cross-link: Glycyl lysine isopeptide (Lys-Gly) (interchain with G-Cter in URM1). D-glyceraldehyde 3-phosphate is bound by residues Thr180, 209-210 (TG), and Arg232. Position 302 is a phosphoserine (Ser302). Lys307 participates in a covalent cross-link: Glycyl lysine isopeptide (Lys-Gly) (interchain with G-Cter in URM1). Positions 314 and 318 each coordinate NAD(+).

This sequence belongs to the glyceraldehyde-3-phosphate dehydrogenase family. In terms of assembly, homotetramer. Conjugated to URM1, a ubiquitin-like protein, in response to oxidative stresses. The attachment of URM1 to lysine residues exclusively depends on the presence of a peroxidatic cysteine in the target protein, with low specificity for the particular residue, motif, or structural context at which urmylation can occur. The URM1-conjugation reaction is mechanistically and directly coupled to the process of cysteine persulfidation, transfering the sulfur atom of the URM1 thiocarboxyl group to redox-active cysteine residues in the target protein if it is exposed to oxidative conditions. In terms of processing, persulfidated on specific redox-active cysteine residues. Persulfidation (also called protein S-sulfhydration) may provide a molecular mechanism that enables cells to protect vulnerable cysteine residues from reactive oxygen species (ROS) under stress conditions.

It is found in the cytoplasm. The protein resides in the mitochondrion. The enzyme catalyses D-glyceraldehyde 3-phosphate + phosphate + NAD(+) = (2R)-3-phospho-glyceroyl phosphate + NADH + H(+). It carries out the reaction NADH + H2O = (6R)-NADHX. The catalysed reaction is NADH + H2O = (6S)-NADHX. It catalyses the reaction NADPH + H2O = (6R)-NADPHX. The enzyme catalyses NADPH + H2O = (6S)-NADPHX. The protein operates within carbohydrate degradation; glycolysis; pyruvate from D-glyceraldehyde 3-phosphate: step 1/5. Functionally, glyceraldehyde-3-phosphate dehydrogenase (GAPDH) involved in glycolysis and gluconeogenesis. Catalyzes the reaction of glyceraldehyde-3-phosphate to 1,3 bis-phosphoglycerate. The contribution of the TDH1, TDH2, and TDH3 to the total glyceraldehyde-3-phosphate dehydrogenase activity is 10-15, 25-30, and 50-60%, respectively. Its function is as follows. As a side activity, catalyzes the hydration of the nicotinamide ring of NADH or NADPH at the C6 position to give the corresponding hydrates, NADHX and NADPHX, which exist as R and S epimers, that cannot act as electron donors or acceptors and inhibit several dehydrogenases, making them toxic. The protein is Glyceraldehyde-3-phosphate dehydrogenase 3 of Saccharomyces cerevisiae (strain ATCC 204508 / S288c) (Baker's yeast).